The following is a 290-amino-acid chain: MASSMAATATLSPPVLSAERPTVRGGLFLPPSPATSRSLRLQSARRCGISPATRKPRSLPRAAKVVVAVKADPLKVMIAGAPASGKGTQCELIKSKYGLVHISAGDLLRAEIAAGSENGKRAKEFMEKGQLVPDEIVVNMVKERLLQPDAQEKGWLLDGYPRSYSQAMALETLNIRPDIFILLDVPDELLVERVVGRRLDPVTGKIYHLKYSPPENEEIASRLTQRFDDTEEKVKLRLQTHYQNVESLLSIYEDVIVEVKGDALVDDVFAEIDKQLTSSLDKKTEMVASA.

Positions 1 to 10 are enriched in low complexity; it reads MASSMAATAT. A disordered region spans residues 1-37; sequence MASSMAATATLSPPVLSAERPTVRGGLFLPPSPATSR. The N-terminal 61 residues, 1–61, are a transit peptide targeting the chloroplast; sequence MASSMAATAT…ATRKPRSLPR (61 aa). 83 to 88 is a binding site for ATP; that stretch reads ASGKGT. The segment at 103–132 is NMP; sequence SAGDLLRAEIAAGSENGKRAKEFMEKGQLV. AMP contacts are provided by residues Arg-109, 130-132, 159-162, and Gln-166; these read QLV and GYPR. ATP is bound by residues Arg-193, Arg-197, and 206–207; that span reads IY. The segment at 196 to 229 is LID; that stretch reads GRRLDPVTGKIYHLKYSPPENEEIASRLTQRFDD. AMP-binding residues include Arg-226 and Arg-237.

The protein belongs to the adenylate kinase family.

It is found in the plastid. Its subcellular location is the chloroplast. It carries out the reaction AMP + ATP = 2 ADP. Its function is as follows. Catalyzes the reversible transfer of the terminal phosphate group between ATP and AMP. Plays an important role in cellular energy homeostasis and in adenine nucleotide metabolism. This Oryza sativa subsp. japonica (Rice) protein is Probable adenylate kinase 2, chloroplastic.